Consider the following 409-residue polypeptide: Lissencephaly-1 homolog (409 aa).

A LisH domain is found at 7 to 39; the sequence is QKEELNKAIADYLHQCGFEDTLNAFKQDANMPG. Residues 54–80 are a coiled coil; it reads TSVIRLQKKVMDLETRLSEAEKEVHHG. The disordered stretch occupies residues 72–95; that stretch reads EAEKEVHHGGGPKKTRSPEDWIPR. 7 WD repeats span residues 104 to 145, 146 to 187, 188 to 229, 231 to 269, 272 to 332, 335 to 374, and 377 to 409; these read GHRS…RTLK, GHTD…RTLH, GHDH…KTFQ, HGEWVRRVRPNADGSLIASCSNDQTIRVWVVASRECKCD, DHDH…CLVT, GHDNWVRAVMFHPGGKFIVSCSDDKTLRIWDYKNKRCAKT, and AHEHFVTTLDFHKSAPFVATGSVDLTLKVWECR.

The protein belongs to the WD repeat LIS1/nudF family.

Its subcellular location is the cytoplasm. It is found in the cytoskeleton. The protein localises to the microtubule organizing center. It localises to the centrosome. Positively regulates the activity of the minus-end directed microtubule motor protein dynein. May enhance dynein-mediated microtubule sliding by targeting dynein to the microtubule plus end. Required for several dynein- and microtubule-dependent processes. In Nematostella vectensis (Starlet sea anemone), this protein is Lissencephaly-1 homolog.